We begin with the raw amino-acid sequence, 433 residues long: Homogentisate 1,2-dioxygenase (433 aa).

H288 (proton acceptor) is an active-site residue. Positions 331 and 337 each coordinate Fe cation. Residues Y346 and H367 each coordinate homogentisate. H367 contributes to the Fe cation binding site.

This sequence belongs to the homogentisate dioxygenase family. In terms of assembly, hexamer; dimer of trimers. Fe cation serves as cofactor.

It catalyses the reaction homogentisate + O2 = 4-maleylacetoacetate + H(+). Its pathway is amino-acid degradation; L-phenylalanine degradation; acetoacetate and fumarate from L-phenylalanine: step 4/6. Involved in the catabolism of homogentisate (2,5-dihydroxyphenylacetate or 2,5-OH-PhAc), a central intermediate in the degradation of phenylalanine and tyrosine. Catalyzes the oxidative ring cleavage of the aromatic ring of homogentisate to yield maleylacetoacetate. This is Homogentisate 1,2-dioxygenase from Pseudomonas entomophila (strain L48).